We begin with the raw amino-acid sequence, 602 residues long: Aspartate--tRNA(Asp/Asn) ligase (602 aa).

E175 provides a ligand contact to L-aspartate. The tract at residues 199–202 is aspartate; it reads QIFK. R221 contributes to the L-aspartate binding site. ATP is bound by residues 221 to 223 and Q230; that span reads RDE. H458 is an L-aspartate binding site. Residue E492 participates in ATP binding. Position 499 (R499) interacts with L-aspartate. ATP is bound at residue 544–547; that stretch reads GLDR.

This sequence belongs to the class-II aminoacyl-tRNA synthetase family. Type 1 subfamily. Homodimer.

Its subcellular location is the cytoplasm. The enzyme catalyses tRNA(Asx) + L-aspartate + ATP = L-aspartyl-tRNA(Asx) + AMP + diphosphate. Functionally, aspartyl-tRNA synthetase with relaxed tRNA specificity since it is able to aspartylate not only its cognate tRNA(Asp) but also tRNA(Asn). Reaction proceeds in two steps: L-aspartate is first activated by ATP to form Asp-AMP and then transferred to the acceptor end of tRNA(Asp/Asn). This Cupriavidus pinatubonensis (strain JMP 134 / LMG 1197) (Cupriavidus necator (strain JMP 134)) protein is Aspartate--tRNA(Asp/Asn) ligase.